The primary structure comprises 89 residues: Small ribosomal subunit protein uS15 (89 aa).

This sequence belongs to the universal ribosomal protein uS15 family. As to quaternary structure, part of the 30S ribosomal subunit. Forms a bridge to the 50S subunit in the 70S ribosome, contacting the 23S rRNA.

In terms of biological role, one of the primary rRNA binding proteins, it binds directly to 16S rRNA where it helps nucleate assembly of the platform of the 30S subunit by binding and bridging several RNA helices of the 16S rRNA. Functionally, forms an intersubunit bridge (bridge B4) with the 23S rRNA of the 50S subunit in the ribosome. In Bdellovibrio bacteriovorus (strain ATCC 15356 / DSM 50701 / NCIMB 9529 / HD100), this protein is Small ribosomal subunit protein uS15.